A 76-amino-acid polypeptide reads, in one-letter code: Dermaseptin-S7 (76 aa).

Positions 1-22 (MDILKKSLFLVLFLGLISLSFC) are cleaved as a signal peptide. Residues 23–45 (EEEKRENEDEEEQEDDEQSEEKR) constitute a propeptide that is removed on maturation. The tract at residues 25 to 45 (EKRENEDEEEQEDDEQSEEKR) is disordered. The segment covering 30-41 (EDEEEQEDDEQS) has biased composition (acidic residues). Q73 carries the glutamine amide modification. Positions 75-76 (EQ) are excised as a propeptide.

This sequence belongs to the frog skin active peptide (FSAP) family. Dermaseptin subfamily. As to expression, expressed by the skin glands.

It is found in the secreted. In terms of biological role, antimicrobial peptide. The chain is Dermaseptin-S7 from Phyllomedusa sauvagei (Sauvage's leaf frog).